Reading from the N-terminus, the 964-residue chain is Glycine dehydrogenase (decarboxylating) (964 aa).

The span at 1 to 11 shows a compositional bias: polar residues; that stretch reads MNSTLQNQTKT. The tract at residues 1–21 is disordered; that stretch reads MNSTLQNQTKTNLEKVGTDPL. An N6-(pyridoxal phosphate)lysine modification is found at Lys-713.

It belongs to the GcvP family. The glycine cleavage system is composed of four proteins: P, T, L and H. Requires pyridoxal 5'-phosphate as cofactor.

It catalyses the reaction N(6)-[(R)-lipoyl]-L-lysyl-[glycine-cleavage complex H protein] + glycine + H(+) = N(6)-[(R)-S(8)-aminomethyldihydrolipoyl]-L-lysyl-[glycine-cleavage complex H protein] + CO2. Functionally, the glycine cleavage system catalyzes the degradation of glycine. The P protein binds the alpha-amino group of glycine through its pyridoxal phosphate cofactor; CO(2) is released and the remaining methylamine moiety is then transferred to the lipoamide cofactor of the H protein. The protein is Glycine dehydrogenase (decarboxylating) of Leptospira interrogans serogroup Icterohaemorrhagiae serovar Lai (strain 56601).